The following is a 131-amino-acid chain: Small ribosomal subunit protein bS6 (131 aa).

Positions 100–131 (SPMVKAKDERRERREDFANETSDDADAGDSEE) are disordered. Over residues 104 to 116 (KAKDERRERREDF) the composition is skewed to basic and acidic residues. Acidic residues predominate over residues 120 to 131 (TSDDADAGDSEE).

It belongs to the bacterial ribosomal protein bS6 family.

Functionally, binds together with bS18 to 16S ribosomal RNA. This chain is Small ribosomal subunit protein bS6, found in Erwinia tasmaniensis (strain DSM 17950 / CFBP 7177 / CIP 109463 / NCPPB 4357 / Et1/99).